Reading from the N-terminus, the 180-residue chain is Large ribosomal subunit protein uL5 (180 aa).

This sequence belongs to the universal ribosomal protein uL5 family. In terms of assembly, part of the 50S ribosomal subunit; part of the 5S rRNA/L5/L18/L25 subcomplex. Contacts the 5S rRNA and the P site tRNA. Forms a bridge to the 30S subunit in the 70S ribosome.

Its function is as follows. This is one of the proteins that bind and probably mediate the attachment of the 5S RNA into the large ribosomal subunit, where it forms part of the central protuberance. In the 70S ribosome it contacts protein S13 of the 30S subunit (bridge B1b), connecting the 2 subunits; this bridge is implicated in subunit movement. Contacts the P site tRNA; the 5S rRNA and some of its associated proteins might help stabilize positioning of ribosome-bound tRNAs. This is Large ribosomal subunit protein uL5 from Streptococcus thermophilus (strain CNRZ 1066).